A 100-amino-acid chain; its full sequence is Small ribosomal subunit protein uS14c (100 aa).

This sequence belongs to the universal ribosomal protein uS14 family. As to quaternary structure, part of the 30S ribosomal subunit.

The protein localises to the plastid. The protein resides in the chloroplast. Its function is as follows. Binds 16S rRNA, required for the assembly of 30S particles. The chain is Small ribosomal subunit protein uS14c from Stigeoclonium helveticum (Green alga).